A 530-amino-acid chain; its full sequence is Light-independent protochlorophyllide reductase subunit B (530 aa).

D36 serves as a coordination point for [4Fe-4S] cluster. D290 acts as the Proton donor in catalysis. Residue 425-426 (GL) participates in substrate binding.

Belongs to the ChlB/BchB/BchZ family. Protochlorophyllide reductase is composed of three subunits; ChlL, ChlN and ChlB. Forms a heterotetramer of two ChlB and two ChlN subunits. Requires [4Fe-4S] cluster as cofactor.

The catalysed reaction is chlorophyllide a + oxidized 2[4Fe-4S]-[ferredoxin] + 2 ADP + 2 phosphate = protochlorophyllide a + reduced 2[4Fe-4S]-[ferredoxin] + 2 ATP + 2 H2O. The protein operates within porphyrin-containing compound metabolism; chlorophyll biosynthesis (light-independent). Its function is as follows. Component of the dark-operative protochlorophyllide reductase (DPOR) that uses Mg-ATP and reduced ferredoxin to reduce ring D of protochlorophyllide (Pchlide) to form chlorophyllide a (Chlide). This reaction is light-independent. The NB-protein (ChlN-ChlB) is the catalytic component of the complex. This Synechococcus sp. (strain WH7803) protein is Light-independent protochlorophyllide reductase subunit B.